Here is a 406-residue protein sequence, read N- to C-terminus: MAVNLTEKTAEQLPDIDGIALYTAQAGVKKPGHTDLTLIAVAAGSTVGAVFTTNRFCAAPVHIAKSHLFDEDGVRALVINTGNANAGTGAQGRIDALAVCAAAARQIGCKPNQVMPFSTGVILEPLPADKIIAALPKMQPAFWNEAARAIMTTDTVPKAASREGKVGDQHTVRATGIAKGSGMIHPNMATMLGFIATDAKVSQPVLQLMTQEIADETFNTITVDGDTSTNDSFVIIATGKNSQSEIDNIADPRYAQLKELLCSLALELAQAIVRDGEGATKFITVRVENAKTCDEARQAAYAAARSPLVKTAFFASDPNLGRLLAAIGYADVADLDTDLVEMYLDDILVAEHGGRAASYTEAQGQAVMSKDEITVRIKLHRGQAAATVYTCDLSHGYVSINADYRS.

The substrate site is built by T152, K179, T190, E277, N401, and S406. T190 serves as the catalytic Nucleophile.

The protein belongs to the ArgJ family. As to quaternary structure, heterotetramer of two alpha and two beta chains.

It is found in the cytoplasm. The enzyme catalyses N(2)-acetyl-L-ornithine + L-glutamate = N-acetyl-L-glutamate + L-ornithine. It catalyses the reaction L-glutamate + acetyl-CoA = N-acetyl-L-glutamate + CoA + H(+). It functions in the pathway amino-acid biosynthesis; L-arginine biosynthesis; L-ornithine and N-acetyl-L-glutamate from L-glutamate and N(2)-acetyl-L-ornithine (cyclic): step 1/1. Its pathway is amino-acid biosynthesis; L-arginine biosynthesis; N(2)-acetyl-L-ornithine from L-glutamate: step 1/4. Functionally, catalyzes two activities which are involved in the cyclic version of arginine biosynthesis: the synthesis of N-acetylglutamate from glutamate and acetyl-CoA as the acetyl donor, and of ornithine by transacetylation between N(2)-acetylornithine and glutamate. The protein is Arginine biosynthesis bifunctional protein ArgJ of Neisseria gonorrhoeae (strain ATCC 700825 / FA 1090).